The primary structure comprises 62 residues: MFPLKKSLLLLFFLGTINLSFCEEERDVDQDERRDDPGERNVQVEKRLLRHVVKILEKYLGK.

Positions 1 to 22 (MFPLKKSLLLLFFLGTINLSFC) are cleaved as a signal peptide. The propeptide occupies 23-47 (EEERDVDQDERRDDPGERNVQVEKR). L60 carries the leucine amide modification.

It belongs to the frog skin active peptide (FSAP) family. Temporin subfamily. In terms of tissue distribution, expressed by the skin glands.

The protein resides in the secreted. It is found in the target cell membrane. Its function is as follows. Antimicrobial peptide with amphipathic alpha-helical structure that acts against both Gram-positive and Gram-negative bacteria and the fungus Candida albicans. Is active against S.aureus ATCC 25923 (MIC=2.5 ug/ml), S.suis 2 CVCC 606 (MIC=15.6 ug/ml), Salmonella ATCC 20020 (MIC=15.6 ug/ml), P.aeruginosa ATCC 227853 (MIC=60 ug/ml), and C.albicans ATCC10231 (MIC=31.25 ug/ml). Is not active against B.subtilis ADB403, E.coli ATCC 25922, and K.pneumoniae ATCC 700603. Also shows a strong antitumor activity, but no hemolytic activity. This is Temporin-La from Aquarana catesbeiana (American bullfrog).